Here is a 110-residue protein sequence, read N- to C-terminus: Iron-sulfur cluster assembly protein CyaY (110 aa).

It belongs to the frataxin family.

In terms of biological role, involved in iron-sulfur (Fe-S) cluster assembly. May act as a regulator of Fe-S biogenesis. The chain is Iron-sulfur cluster assembly protein CyaY from Pseudomonas fluorescens (strain ATCC BAA-477 / NRRL B-23932 / Pf-5).